Consider the following 277-residue polypeptide: 4-hydroxy-3-methylbut-2-enyl diphosphate reductase (277 aa).

A [4Fe-4S] cluster-binding site is contributed by Cys-12. 2 residues coordinate (2E)-4-hydroxy-3-methylbut-2-enyl diphosphate: His-36 and His-70. Dimethylallyl diphosphate-binding residues include His-36 and His-70. Isopentenyl diphosphate contacts are provided by His-36 and His-70. [4Fe-4S] cluster is bound at residue Cys-92. (2E)-4-hydroxy-3-methylbut-2-enyl diphosphate is bound at residue His-120. His-120 contacts dimethylallyl diphosphate. His-120 contacts isopentenyl diphosphate. Glu-122 functions as the Proton donor in the catalytic mechanism. Residue Thr-158 coordinates (2E)-4-hydroxy-3-methylbut-2-enyl diphosphate. Position 186 (Cys-186) interacts with [4Fe-4S] cluster. (2E)-4-hydroxy-3-methylbut-2-enyl diphosphate-binding residues include Ser-214, Asn-216, and Ser-258. The dimethylallyl diphosphate site is built by Ser-214, Asn-216, and Ser-258. Isopentenyl diphosphate contacts are provided by Ser-214, Asn-216, and Ser-258.

It belongs to the IspH family. The cofactor is [4Fe-4S] cluster.

It catalyses the reaction isopentenyl diphosphate + 2 oxidized [2Fe-2S]-[ferredoxin] + H2O = (2E)-4-hydroxy-3-methylbut-2-enyl diphosphate + 2 reduced [2Fe-2S]-[ferredoxin] + 2 H(+). It carries out the reaction dimethylallyl diphosphate + 2 oxidized [2Fe-2S]-[ferredoxin] + H2O = (2E)-4-hydroxy-3-methylbut-2-enyl diphosphate + 2 reduced [2Fe-2S]-[ferredoxin] + 2 H(+). The protein operates within isoprenoid biosynthesis; dimethylallyl diphosphate biosynthesis; dimethylallyl diphosphate from (2E)-4-hydroxy-3-methylbutenyl diphosphate: step 1/1. Its pathway is isoprenoid biosynthesis; isopentenyl diphosphate biosynthesis via DXP pathway; isopentenyl diphosphate from 1-deoxy-D-xylulose 5-phosphate: step 6/6. Functionally, catalyzes the conversion of 1-hydroxy-2-methyl-2-(E)-butenyl 4-diphosphate (HMBPP) into a mixture of isopentenyl diphosphate (IPP) and dimethylallyl diphosphate (DMAPP). Acts in the terminal step of the DOXP/MEP pathway for isoprenoid precursor biosynthesis. The sequence is that of 4-hydroxy-3-methylbut-2-enyl diphosphate reductase from Campylobacter jejuni subsp. jejuni serotype O:23/36 (strain 81-176).